Reading from the N-terminus, the 118-residue chain is MAGVMKLACLVLACMIVAGPITANRALTCGTVNSNVAPCIGYITQGGTLPGACCTGVSKLNSMARTTPDRQQACRCLETAARALGPNLNAGRAAGIPKACGVSVPFPISTNTNCNNVK.

The N-terminal stretch at 1-25 (MAGVMKLACLVLACMIVAGPITANR) is a signal peptide. Cystine bridges form between Cys29–Cys76, Cys39–Cys53, Cys54–Cys100, and Cys74–Cys114.

Belongs to the plant LTP family.

Functionally, plant non-specific lipid-transfer proteins transfer phospholipids as well as galactolipids across membranes. May play a role in wax or cutin deposition in the cell walls of expanding epidermal cells and certain secretory tissues. This is Non-specific lipid-transfer protein A (WAX9A) from Brassica oleracea var. italica (Broccoli).